A 121-amino-acid chain; its full sequence is Putative RNase MJ0127 (121 aa).

Residues Arg-76 and His-81 contribute to the active site. Positions 76–83 match the RX(4)HXY motif motif; sequence RDKLIHHY. Residue Tyr-83 is modified to O-di-AMP-tyrosine.

The protein belongs to the HepT RNase toxin family. Homodimer, probably forms a complex with cognate antitoxin MJ0128. Post-translationally, modified by cognate antitoxin MJ0128; probably at least 2 successive AMPylation events occur on Tyr-83.

In terms of biological role, probable toxic component of a putative type VII toxin-antitoxin (TA) system, probably an RNase. Probably neutralized by cognate antitoxin MJ0128. Neutralization may be due to AMPylation by MJ0128. This is Putative RNase MJ0127 from Methanocaldococcus jannaschii (strain ATCC 43067 / DSM 2661 / JAL-1 / JCM 10045 / NBRC 100440) (Methanococcus jannaschii).